A 602-amino-acid chain; its full sequence is Multicopper oxidase aurL2 (602 aa).

Positions 1 to 17 (MLFRFLALLPFVAGAFA) are cleaved as a signal peptide. Plastocyanin-like domains follow at residues 38–149 (DIKI…VRDA) and 160–317 (IPLL…KYRC). N-linked (GlcNAc...) asparagine glycans are attached at residues N52 and N80. H84, H86, H130, and H132 together coordinate Cu cation. N201, N247, N337, N383, N387, N419, and N424 each carry an N-linked (GlcNAc...) asparagine glycan. The Plastocyanin-like 3 domain occupies 421–556 (TTPNYTLALE…QVMGMATVWV (136 aa)). H469 contacts Cu cation. N-linked (GlcNAc...) asparagine glycans are attached at residues N482 and N486.

The protein belongs to the multicopper oxidase family.

The protein operates within pigment biosynthesis. Multicopper oxidase; part of the gene cluster that mediates the biosynthesis of aurofusarin, a red mycelium pigment which is acting as a mycotoxin. The first step is performed by the polyketide synthase which condenses one acetyl-CoA and 6 malonyl-CoA units to form the first intermediate, the cyclic heptaketide and yellow pigment YWA1. The C2 hydroxyl group in the pyrone ring of YWA1 is probably formed during ring closure by an aldol-type cyclization reaction. The dehydratase aurZ then acts as the first tailoring enzyme in the aurofusarin biosynthetic pathway by converting YWA1 to nor-rubrofusarin. Nor-rubrofusarin is then methylated to rubrofusarin by the O-methyltransferase aurJ. Rubrofusarin is then transported across the plasma membrane by the rubrofusarin-specific pump aurT for further enzymatic processing by the extracellular complex composed of GIP1, aurF, aurO and aurS to yield aurofusarin. The sequence is that of Multicopper oxidase aurL2 (aurL2) from Gibberella zeae (strain ATCC MYA-4620 / CBS 123657 / FGSC 9075 / NRRL 31084 / PH-1) (Wheat head blight fungus).